The following is a 451-amino-acid chain: Proline--tRNA ligase (451 aa).

It belongs to the class-II aminoacyl-tRNA synthetase family. ProS type 2 subfamily. As to quaternary structure, homodimer.

It localises to the cytoplasm. It catalyses the reaction tRNA(Pro) + L-proline + ATP = L-prolyl-tRNA(Pro) + AMP + diphosphate. Catalyzes the attachment of proline to tRNA(Pro) in a two-step reaction: proline is first activated by ATP to form Pro-AMP and then transferred to the acceptor end of tRNA(Pro). This is Proline--tRNA ligase from Roseobacter denitrificans (strain ATCC 33942 / OCh 114) (Erythrobacter sp. (strain OCh 114)).